The following is a 300-amino-acid chain: Ribosomal protein bS6--L-glutamate ligase (300 aa).

Positions 104–287 constitute an ATP-grasp domain; it reads MQLLARQGID…IAGKMIRWIE (184 aa). ATP is bound by residues K141, 178-179, D187, and 211-213; these read EY and RSN. Residues D248, E260, and N262 each coordinate Mg(2+). The Mn(2+) site is built by D248, E260, and N262.

Belongs to the RimK family. Mg(2+) serves as cofactor. Requires Mn(2+) as cofactor.

An L-glutamate ligase that catalyzes the ATP-dependent post-translational addition of glutamate residues to the C-terminus of ribosomal protein bS6 (RpsF). Is also able to catalyze the synthesis of poly-alpha-glutamate in vitro, via ATP hydrolysis from unprotected glutamate as substrate. The number of glutamate residues added to either RpsF or to poly-alpha-glutamate changes with pH. In Shigella flexneri serotype 5b (strain 8401), this protein is Ribosomal protein bS6--L-glutamate ligase.